Consider the following 542-residue polypeptide: MARYVFITGGVVSSLGKGIAAAALGALLQARGYRVRLRKLDPYLNVDPGTMSPTQHGEVFVTDDGAETDLDLGHYERFTGRSATKTDNITTGRIYKNIIDKERRGDYLGATVQVIPHVTNEIKNFVTEGNEDYDFVICEIGGTVGDIEAMPFMEAIRQLGNDLPRGTAVYVHLTLMPYIPAAGELKTKPTQHSVKELQALGIHPDILLVRADREIPEAERRKLSLFCNVRQSAVIQALDVASIYDVPIAYHKEGLDNEVLAAFGIEPAPKPRMEAWEDVAHRIRTPEGEVTIAIVGKYTGLKDAYKSLIEALYHGGIANRVKVKLEWIESEVFEKEDPAPYLEKVHGILVPGGFGERGSEGKINAARFARERKVPYFGICFGMQMAVVEAARNLAGIEKASSTEFGPTKEPVVGLMTEWVKGNELEKRSAAGDLGGTMRLGAYRAALKPDTKIAGIYGSPDISERHRHRYEVNVDYKSRLESCGLVFSGMSPDGVLPETIEYPDHPWFIGVQYHPELKSRPLDPHPLFSSFIEAALEQSRLV.

Residues 1-265 (MARYVFITGG…DNEVLAAFGI (265 aa)) are amidoligase domain. Position 13 (S13) interacts with CTP. S13 is a binding site for UTP. ATP is bound by residues 14–19 (SLGKGI) and D71. D71 and E139 together coordinate Mg(2+). CTP-binding positions include 146 to 148 (DIE), 186 to 191 (KTKPTQ), and K222. Residues 186–191 (KTKPTQ) and K222 each bind UTP. Residues 291 to 541 (TIAIVGKYTG…IEAALEQSRL (251 aa)) form the Glutamine amidotransferase type-1 domain. G353 is a binding site for L-glutamine. Catalysis depends on C380, which acts as the Nucleophile; for glutamine hydrolysis. Residues 381-384 (FGMQ), E404, and R469 contribute to the L-glutamine site. Active-site residues include H514 and E516.

Belongs to the CTP synthase family. In terms of assembly, homotetramer.

It catalyses the reaction UTP + L-glutamine + ATP + H2O = CTP + L-glutamate + ADP + phosphate + 2 H(+). It carries out the reaction L-glutamine + H2O = L-glutamate + NH4(+). The catalysed reaction is UTP + NH4(+) + ATP = CTP + ADP + phosphate + 2 H(+). It functions in the pathway pyrimidine metabolism; CTP biosynthesis via de novo pathway; CTP from UDP: step 2/2. With respect to regulation, allosterically activated by GTP, when glutamine is the substrate; GTP has no effect on the reaction when ammonia is the substrate. The allosteric effector GTP functions by stabilizing the protein conformation that binds the tetrahedral intermediate(s) formed during glutamine hydrolysis. Inhibited by the product CTP, via allosteric rather than competitive inhibition. In terms of biological role, catalyzes the ATP-dependent amination of UTP to CTP with either L-glutamine or ammonia as the source of nitrogen. Regulates intracellular CTP levels through interactions with the four ribonucleotide triphosphates. The polypeptide is CTP synthase (Rhizobium meliloti (strain 1021) (Ensifer meliloti)).